Consider the following 130-residue polypeptide: YopE regulator (130 aa).

In terms of biological role, positive regulator of YopE. The polypeptide is YopE regulator (yerA) (Yersinia enterocolitica serotype O:8 / biotype 1B (strain NCTC 13174 / 8081)).